A 449-amino-acid polypeptide reads, in one-letter code: MGNHYIPNSAHKEEMLKEIGLSSIEELFADIPEKFIKEELNLPEGKSEYEVFLEMNEILEKNKTVLEMPTFLGAGTYFHYIPAHVKHLIERSEFLTSYTPYQPEISQGMLQALFEYQSLIAELVGLPVVNSSMYDWGTAMAEAALMTVRLHKGKRKKFVVPKHTHPERLQVLRTYTRGPEVEIVTVNWNERGQVDVEDLKEKVKDAAGVYIEIPNFFGLLEEEIREVGEIAHEAGAYFVVGVDPTILGIVEAPGELGADIVVGEASYFGNPMNFGGPRAGIFAVKNDMKLIRQMPGRIIGMTKDAEGKRAFVMTLQTREQHIRRAKATSNICSNEALVAVAAAIHIASLGPKGIRELGEVILKNTAYLKKRLSEVAEIPFDGVNFKDVLVRFDKPYREIHEELLKRNIHGGYYVGSHFPELGEAALFAATETTRKEWVDALISALKEVI.

It belongs to the GcvP family. N-terminal subunit subfamily. The glycine cleavage system is composed of four proteins: P, T, L and H. In this organism, the P 'protein' is a heterodimer of two subunits.

It catalyses the reaction N(6)-[(R)-lipoyl]-L-lysyl-[glycine-cleavage complex H protein] + glycine + H(+) = N(6)-[(R)-S(8)-aminomethyldihydrolipoyl]-L-lysyl-[glycine-cleavage complex H protein] + CO2. In terms of biological role, the glycine cleavage system catalyzes the degradation of glycine. The P protein binds the alpha-amino group of glycine through its pyridoxal phosphate cofactor; CO(2) is released and the remaining methylamine moiety is then transferred to the lipoamide cofactor of the H protein. The chain is Probable glycine dehydrogenase (decarboxylating) subunit 1 from Pyrococcus horikoshii (strain ATCC 700860 / DSM 12428 / JCM 9974 / NBRC 100139 / OT-3).